The following is a 96-amino-acid chain: DNA-binding protein Saci_1468 (96 aa).

It belongs to the PDCD5 family.

The protein is DNA-binding protein Saci_1468 of Sulfolobus acidocaldarius (strain ATCC 33909 / DSM 639 / JCM 8929 / NBRC 15157 / NCIMB 11770).